The following is a 616-amino-acid chain: Glutamine--fructose-6-phosphate aminotransferase [isomerizing] (616 aa).

C2 acts as the Nucleophile; for GATase activity in catalysis. A Glutamine amidotransferase type-2 domain is found at C2–E221. 2 SIS domains span residues L288–T428 and L461–P606. K611 acts as the For Fru-6P isomerization activity in catalysis.

As to quaternary structure, homodimer.

It is found in the cytoplasm. It carries out the reaction D-fructose 6-phosphate + L-glutamine = D-glucosamine 6-phosphate + L-glutamate. Catalyzes the first step in hexosamine metabolism, converting fructose-6P into glucosamine-6P using glutamine as a nitrogen source. This chain is Glutamine--fructose-6-phosphate aminotransferase [isomerizing], found in Leifsonia xyli subsp. xyli (strain CTCB07).